We begin with the raw amino-acid sequence, 117 residues long: Galanin-like peptide (117 aa).

The N-terminal stretch at 1-23 is a signal peptide; the sequence is MACSVHLVLFLTILLSLAETPES. The propeptide occupies 86–117; the sequence is TMGETFVKANTGDMHILDKNVPKEEATLDSES.

This sequence belongs to the galanin family. In terms of tissue distribution, isoform 2 is found in brain, thymus and skin. Isoform 2 is found in the skin, in pericytes covering microvascular arterioles and venules on their abluminal surfaces. In larger vessels, isoform 2 is expressed in layers of smooth muscle cells. Isoform 2 is not detected in endothelial cells.

The protein localises to the secreted. Hypothalamic neuropeptide which binds to the G-protein-coupled galanin receptors (GALR1, GALR2 and GALR3). Involved in a large number of putative physiological functions in CNS homeostatic processes, including the regulation of gonadotropin-releasing hormone secretion. In terms of biological role, exhibits antimicrobial activity against Gram-negative bacterias, inducing bacterial membrane blebbing. Exhibits potent and dose-dependent vasoconstrictor and anti-edema activity in the cutaneous microvasculature, a physiologic effects which does not appear to be mediated via GALR1 or GALR2. The sequence is that of Galanin-like peptide (Galp) from Mus musculus (Mouse).